A 252-amino-acid polypeptide reads, in one-letter code: Imidazole glycerol phosphate synthase subunit HisF (252 aa).

Residues D11 and D130 contribute to the active site.

The protein belongs to the HisA/HisF family. Heterodimer of HisH and HisF.

It is found in the cytoplasm. The enzyme catalyses 5-[(5-phospho-1-deoxy-D-ribulos-1-ylimino)methylamino]-1-(5-phospho-beta-D-ribosyl)imidazole-4-carboxamide + L-glutamine = D-erythro-1-(imidazol-4-yl)glycerol 3-phosphate + 5-amino-1-(5-phospho-beta-D-ribosyl)imidazole-4-carboxamide + L-glutamate + H(+). The protein operates within amino-acid biosynthesis; L-histidine biosynthesis; L-histidine from 5-phospho-alpha-D-ribose 1-diphosphate: step 5/9. In terms of biological role, IGPS catalyzes the conversion of PRFAR and glutamine to IGP, AICAR and glutamate. The HisF subunit catalyzes the cyclization activity that produces IGP and AICAR from PRFAR using the ammonia provided by the HisH subunit. This is Imidazole glycerol phosphate synthase subunit HisF from Alkaliphilus metalliredigens (strain QYMF).